Here is a 469-residue protein sequence, read N- to C-terminus: Aspartyl/glutamyl-tRNA(Asn/Gln) amidotransferase subunit B (469 aa).

The protein belongs to the GatB/GatE family. GatB subfamily. In terms of assembly, heterotrimer of A, B and C subunits.

The catalysed reaction is L-glutamyl-tRNA(Gln) + L-glutamine + ATP + H2O = L-glutaminyl-tRNA(Gln) + L-glutamate + ADP + phosphate + H(+). It carries out the reaction L-aspartyl-tRNA(Asn) + L-glutamine + ATP + H2O = L-asparaginyl-tRNA(Asn) + L-glutamate + ADP + phosphate + 2 H(+). Allows the formation of correctly charged Asn-tRNA(Asn) or Gln-tRNA(Gln) through the transamidation of misacylated Asp-tRNA(Asn) or Glu-tRNA(Gln) in organisms which lack either or both of asparaginyl-tRNA or glutaminyl-tRNA synthetases. The reaction takes place in the presence of glutamine and ATP through an activated phospho-Asp-tRNA(Asn) or phospho-Glu-tRNA(Gln). This is Aspartyl/glutamyl-tRNA(Asn/Gln) amidotransferase subunit B from Methanococcus maripaludis (strain C6 / ATCC BAA-1332).